Here is a 494-residue protein sequence, read N- to C-terminus: Ell-associated factor Eaf (494 aa).

Positions 119 to 138 (KTRSEVTNKPSLMSATNAPM) are enriched in polar residues. Disordered regions lie at residues 119–212 (KTRS…PAWH) and 243–494 (QANI…DDDD). Residues 139-156 (SNGAPVPSSAAAGTGSAG) show a composition bias toward low complexity. A compositionally biased stretch (polar residues) spans 159-178 (ENSTMRISSKTKVSTGSRRN). Serine 188 is subject to Phosphoserine. 2 stretches are compositionally biased toward polar residues: residues 243-256 (QANI…SSAG) and 280-306 (QQLT…NNYA). A compositionally biased stretch (low complexity) spans 307–319 (QQQQQQQQQQLQQ). A compositionally biased stretch (polar residues) spans 320–332 (RASFSHSNHSNSM). Residues 344–373 (QTAQSMAQAAAALEQQIGGELSASSSSSES) are compositionally biased toward low complexity. Over residues 374 to 389 (DSSDSDSGSDSDDSTE) the composition is skewed to acidic residues. The segment covering 414 to 424 (HQQQQHMHQLP) has biased composition (low complexity). A compositionally biased stretch (basic residues) spans 437 to 454 (SHHHHQQQQQSHHHHHHQ). Composition is skewed to low complexity over residues 455-464 (QQQQQQHQQS) and 475-488 (NDLL…SSNS).

Belongs to the EAF family.

It localises to the nucleus. Its function is as follows. Promotes transcriptional elongation by Su(Tpl)/ELL. Essential for development. This Drosophila virilis (Fruit fly) protein is Ell-associated factor Eaf.